A 30-amino-acid chain; its full sequence is Cyclotide hyen-H (30 aa).

The cyclopeptide (Lys-Asp) cross-link spans 1-30 (KIPCGESCVYIPCISSVLGCSCSNKVCYKD). Disulfide bonds link Cys4–Cys20, Cys8–Cys22, and Cys13–Cys27.

In terms of processing, this is a cyclic peptide. As to expression, detected in stems (at protein level).

Probably participates in a plant defense mechanism. In Pigea enneasperma (Spade flower), this protein is Cyclotide hyen-H.